A 333-amino-acid polypeptide reads, in one-letter code: Protein FLAP1 homolog A (333 aa).

Residues 26–46 (VVIIFVLAFTLVFTPTFEAEA) form a helical membrane-spanning segment. Positions 53-74 (IGGGSFRAPSAPSRSYSGPSGG) are disordered. Positions 58–70 (FRAPSAPSRSYSG) are enriched in low complexity. A run of 2 helical transmembrane segments spans residues 92 to 112 (IIPF…LVMI) and 261 to 281 (GEYI…LPAV).

It belongs to the FLAP family.

Its subcellular location is the cellular thylakoid membrane. It localises to the cell inner membrane. Its function is as follows. Essential for photosynthetic growth under fluctuating light by modulating PxcA- and PxcL-dependent intracellular pH regulation via proton transport (e.g. transient pH reduction upon transition from dark to light followed by an increase in the light until light-to-dark shift). The polypeptide is Protein FLAP1 homolog A (Synechocystis sp. (strain ATCC 27184 / PCC 6803 / Kazusa)).